We begin with the raw amino-acid sequence, 291 residues long: 4-diphosphocytidyl-2-C-methyl-D-erythritol kinase (291 aa).

Residue K11 is part of the active site. 95–105 is an ATP binding site; sequence PVAAGMAGGSS. Residue D137 is part of the active site.

Belongs to the GHMP kinase family. IspE subfamily.

It carries out the reaction 4-CDP-2-C-methyl-D-erythritol + ATP = 4-CDP-2-C-methyl-D-erythritol 2-phosphate + ADP + H(+). The protein operates within isoprenoid biosynthesis; isopentenyl diphosphate biosynthesis via DXP pathway; isopentenyl diphosphate from 1-deoxy-D-xylulose 5-phosphate: step 3/6. In terms of biological role, catalyzes the phosphorylation of the position 2 hydroxy group of 4-diphosphocytidyl-2C-methyl-D-erythritol. This chain is 4-diphosphocytidyl-2-C-methyl-D-erythritol kinase, found in Lachnoclostridium phytofermentans (strain ATCC 700394 / DSM 18823 / ISDg) (Clostridium phytofermentans).